The sequence spans 383 residues: S-adenosylmethionine synthase (383 aa).

Residue His15 participates in ATP binding. Asp17 contacts Mg(2+). Glu43 lines the K(+) pocket. Positions 56 and 99 each coordinate L-methionine. A flexible loop region spans residues Gln99–Arg109. Residues Asp164–Lys166, Arg230–Phe231, Asp239, Arg245–Lys246, Ala262, and Lys266 contribute to the ATP site. L-methionine is bound at residue Asp239. Lys270 contributes to the L-methionine binding site.

The protein belongs to the AdoMet synthase family. In terms of assembly, homotetramer; dimer of dimers. Mg(2+) serves as cofactor. It depends on K(+) as a cofactor.

It localises to the cytoplasm. It carries out the reaction L-methionine + ATP + H2O = S-adenosyl-L-methionine + phosphate + diphosphate. It participates in amino-acid biosynthesis; S-adenosyl-L-methionine biosynthesis; S-adenosyl-L-methionine from L-methionine: step 1/1. In terms of biological role, catalyzes the formation of S-adenosylmethionine (AdoMet) from methionine and ATP. The overall synthetic reaction is composed of two sequential steps, AdoMet formation and the subsequent tripolyphosphate hydrolysis which occurs prior to release of AdoMet from the enzyme. The polypeptide is S-adenosylmethionine synthase (Shewanella putrefaciens (strain CN-32 / ATCC BAA-453)).